A 189-amino-acid chain; its full sequence is dCTP deaminase (189 aa).

Residues 112 to 117 (KSTYAR), 136 to 138 (TLE), Q157, Y171, and Q181 contribute to the dCTP site. The active-site Proton donor/acceptor is the E138.

This sequence belongs to the dCTP deaminase family. In terms of assembly, homotrimer.

It catalyses the reaction dCTP + H2O + H(+) = dUTP + NH4(+). The protein operates within pyrimidine metabolism; dUMP biosynthesis; dUMP from dCTP (dUTP route): step 1/2. Functionally, catalyzes the deamination of dCTP to dUTP. The chain is dCTP deaminase from Leptothrix cholodnii (strain ATCC 51168 / LMG 8142 / SP-6) (Leptothrix discophora (strain SP-6)).